The sequence spans 335 residues: Biotin synthase (335 aa).

The Radical SAM core domain maps to 46–274; the sequence is YNIQLASLFS…KSKIRLSAGR (229 aa). Positions 61, 65, and 68 each coordinate [4Fe-4S] cluster. [2Fe-2S] cluster is bound by residues Cys-105, Cys-137, Cys-197, and Arg-269.

Belongs to the radical SAM superfamily. Biotin synthase family. Homodimer. [4Fe-4S] cluster serves as cofactor. The cofactor is [2Fe-2S] cluster.

It carries out the reaction (4R,5S)-dethiobiotin + (sulfur carrier)-SH + 2 reduced [2Fe-2S]-[ferredoxin] + 2 S-adenosyl-L-methionine = (sulfur carrier)-H + biotin + 2 5'-deoxyadenosine + 2 L-methionine + 2 oxidized [2Fe-2S]-[ferredoxin]. It functions in the pathway cofactor biosynthesis; biotin biosynthesis; biotin from 7,8-diaminononanoate: step 2/2. Catalyzes the conversion of dethiobiotin (DTB) to biotin by the insertion of a sulfur atom into dethiobiotin via a radical-based mechanism. The protein is Biotin synthase of Prochlorococcus marinus (strain MIT 9312).